We begin with the raw amino-acid sequence, 330 residues long: Aspartate--ammonia ligase (330 aa).

The protein belongs to the class-II aminoacyl-tRNA synthetase family. AsnA subfamily.

It is found in the cytoplasm. The enzyme catalyses L-aspartate + NH4(+) + ATP = L-asparagine + AMP + diphosphate + H(+). It functions in the pathway amino-acid biosynthesis; L-asparagine biosynthesis; L-asparagine from L-aspartate (ammonia route): step 1/1. The sequence is that of Aspartate--ammonia ligase from Streptococcus uberis (strain ATCC BAA-854 / 0140J).